Reading from the N-terminus, the 488-residue chain is DNA polymerase II small subunit (488 aa).

This sequence belongs to the DNA polymerase delta/II small subunit family. Heterodimer of a large subunit and a small subunit.

The catalysed reaction is DNA(n) + a 2'-deoxyribonucleoside 5'-triphosphate = DNA(n+1) + diphosphate. It carries out the reaction Exonucleolytic cleavage in the 3'- to 5'-direction to yield nucleoside 5'-phosphates.. Its function is as follows. Possesses two activities: a DNA synthesis (polymerase) and an exonucleolytic activity that degrades single-stranded DNA in the 3' to 5' direction. Has a template-primer preference which is characteristic of a replicative DNA polymerase. The polypeptide is DNA polymerase II small subunit (polB) (Archaeoglobus fulgidus (strain ATCC 49558 / DSM 4304 / JCM 9628 / NBRC 100126 / VC-16)).